Here is a 375-residue protein sequence, read N- to C-terminus: Anhydro-N-acetylmuramic acid kinase (375 aa).

An ATP-binding site is contributed by 18–25; the sequence is GTSMDGID.

The protein belongs to the anhydro-N-acetylmuramic acid kinase family.

The catalysed reaction is 1,6-anhydro-N-acetyl-beta-muramate + ATP + H2O = N-acetyl-D-muramate 6-phosphate + ADP + H(+). It functions in the pathway amino-sugar metabolism; 1,6-anhydro-N-acetylmuramate degradation. The protein operates within cell wall biogenesis; peptidoglycan recycling. In terms of biological role, catalyzes the specific phosphorylation of 1,6-anhydro-N-acetylmuramic acid (anhMurNAc) with the simultaneous cleavage of the 1,6-anhydro ring, generating MurNAc-6-P. Is required for the utilization of anhMurNAc either imported from the medium or derived from its own cell wall murein, and thus plays a role in cell wall recycling. This is Anhydro-N-acetylmuramic acid kinase from Rhodospirillum rubrum (strain ATCC 11170 / ATH 1.1.1 / DSM 467 / LMG 4362 / NCIMB 8255 / S1).